A 359-amino-acid chain; its full sequence is MNVDDFDFELPDRLIARHPPAQRRDARLLALTCDALEHQQFPDLLSHVHPGDLLIFNDTRVIPARLFGQKESGGKVEVLIERVVDDHEALAHVRASKSPKPGSWLEFAKGIRAQVTGRRGALFILHFSLPGNGCDTLLSALELIGHVPLPPYIDRPDEDGDMERYQTVYAREPGAVAAPTAGLHFDDAMLAALEQRGVDIGFVTLHVGAGTFQPVRVDKVEDHHMHSERYQIPGSLVEQVAQAHARGGRVVAVGTTALRALEAASQSGGLHAGQGETDIFIFPGYRFRLVDALVTNFHLPKSTLLMLISAFAGRDRIMGAYRAAIEAQYRFFSYGDAMFIEGTQPASRNTQHVKSGADE.

The protein belongs to the QueA family. Monomer.

The protein resides in the cytoplasm. It carries out the reaction 7-aminomethyl-7-carbaguanosine(34) in tRNA + S-adenosyl-L-methionine = epoxyqueuosine(34) in tRNA + adenine + L-methionine + 2 H(+). It functions in the pathway tRNA modification; tRNA-queuosine biosynthesis. Functionally, transfers and isomerizes the ribose moiety from AdoMet to the 7-aminomethyl group of 7-deazaguanine (preQ1-tRNA) to give epoxyqueuosine (oQ-tRNA). The polypeptide is S-adenosylmethionine:tRNA ribosyltransferase-isomerase (Alcanivorax borkumensis (strain ATCC 700651 / DSM 11573 / NCIMB 13689 / SK2)).